A 143-amino-acid chain; its full sequence is Small ribosomal subunit protein bS18m (143 aa).

The protein belongs to the bacterial ribosomal protein bS18 family. In terms of assembly, component of the mitochondrial ribosome small subunit (28S) which comprises a 12S rRNA and about 30 distinct proteins.

The protein resides in the mitochondrion. The polypeptide is Small ribosomal subunit protein bS18m (MRPS18C) (Bos taurus (Bovine)).